We begin with the raw amino-acid sequence, 277 residues long: Diaminopimelate epimerase (277 aa).

Positions 13, 46, and 66 each coordinate substrate. The active-site Proton donor is cysteine 75. Substrate-binding positions include 76-77 (GN), asparagine 160, asparagine 193, and 211-212 (ER). The active-site Proton acceptor is cysteine 220. Substrate is bound at residue 221 to 222 (GT).

Belongs to the diaminopimelate epimerase family. In terms of assembly, homodimer.

The protein localises to the cytoplasm. It carries out the reaction (2S,6S)-2,6-diaminopimelate = meso-2,6-diaminopimelate. It functions in the pathway amino-acid biosynthesis; L-lysine biosynthesis via DAP pathway; DL-2,6-diaminopimelate from LL-2,6-diaminopimelate: step 1/1. Catalyzes the stereoinversion of LL-2,6-diaminopimelate (L,L-DAP) to meso-diaminopimelate (meso-DAP), a precursor of L-lysine and an essential component of the bacterial peptidoglycan. This is Diaminopimelate epimerase from Saccharophagus degradans (strain 2-40 / ATCC 43961 / DSM 17024).